A 260-amino-acid polypeptide reads, in one-letter code: Snake venom serine proteinase 4a (260 aa).

The first 18 residues, 1-18, serve as a signal peptide directing secretion; it reads MVLIRVLANLLILQLSYA. Residues 19-24 constitute a propeptide that is removed on maturation; it reads QMSSEL. A Peptidase S1 domain is found at 25–251; the sequence is VTGGDECNRN…HLDWIQRIIA (227 aa). 6 cysteine pairs are disulfide-bonded: C31–C163, C50–C66, C98–C258, C142–C212, C174–C191, and C202–C227. The active-site Charge relay system is the H65. The N-linked (GlcNAc...) asparagine glycan is linked to N103. D110 functions as the Charge relay system in the catalytic mechanism. The Charge relay system role is filled by S206.

This sequence belongs to the peptidase S1 family. Snake venom subfamily. As to quaternary structure, monomer. As to expression, expressed by the venom gland.

Its subcellular location is the secreted. Its function is as follows. Snake venom serine protease that may act in the hemostasis system of the prey. The protein is Snake venom serine proteinase 4a of Crotalus adamanteus (Eastern diamondback rattlesnake).